The primary structure comprises 222 residues: 7-cyano-7-deazaguanine synthase (222 aa).

ATP is bound at residue 9–19; the sequence is ISGGMDSALSA. The Zn(2+) site is built by Cys-188, Cys-196, Cys-199, and Cys-202.

It belongs to the QueC family. Zn(2+) is required as a cofactor.

The enzyme catalyses 7-carboxy-7-deazaguanine + NH4(+) + ATP = 7-cyano-7-deazaguanine + ADP + phosphate + H2O + H(+). It participates in purine metabolism; 7-cyano-7-deazaguanine biosynthesis. Catalyzes the ATP-dependent conversion of 7-carboxy-7-deazaguanine (CDG) to 7-cyano-7-deazaguanine (preQ(0)). The sequence is that of 7-cyano-7-deazaguanine synthase from Sulfurovum sp. (strain NBC37-1).